The chain runs to 116 residues: Large ribosomal subunit protein uL18 (116 aa).

This sequence belongs to the universal ribosomal protein uL18 family. Part of the 50S ribosomal subunit; part of the 5S rRNA/L5/L18/L25 subcomplex. Contacts the 5S and 23S rRNAs.

In terms of biological role, this is one of the proteins that bind and probably mediate the attachment of the 5S RNA into the large ribosomal subunit, where it forms part of the central protuberance. In Caulobacter vibrioides (strain ATCC 19089 / CIP 103742 / CB 15) (Caulobacter crescentus), this protein is Large ribosomal subunit protein uL18.